Here is a 216-residue protein sequence, read N- to C-terminus: Large ribosomal subunit protein uL1z (216 aa).

Belongs to the universal ribosomal protein uL1 family. In terms of assembly, interacts with the GTPase NUG2.

The polypeptide is Large ribosomal subunit protein uL1z (RPL10AA) (Arabidopsis thaliana (Mouse-ear cress)).